Reading from the N-terminus, the 261-residue chain is MKRLLCLLLLTTLTGCGSFLIQNPNLQENEVTSATTNVDAVEGDKEEDTGIIDTLRGRSEPISGDPAWAPIHPKEKPEHYAAATGSLFNVDHAQDMYDDTKPRGLGDIVTVMLAENTKAAKSADAELSKKNDSSMDPLQVGGQELQVGGQYNFSYELSNDNKFTGNTSANQSNSLSGSITVEVIEVLSNGNLLIRGEKWLTLNTGDEYIRLSGTIRPDDIAFDNTIASTRISNARIQYSGTGDQQDMQEPGFLARFFNVAL.

The signal sequence occupies residues 1–15; the sequence is MKRLLCLLLLTTLTG. A lipid anchor (N-palmitoyl cysteine) is attached at Cys16. Cys16 is lipidated: S-diacylglycerol cysteine. Positions 121-133 are enriched in basic and acidic residues; it reads KSADAELSKKNDS. Residues 121–140 are disordered; the sequence is KSADAELSKKNDSSMDPLQV.

This sequence belongs to the FlgH family. As to quaternary structure, the basal body constitutes a major portion of the flagellar organelle and consists of four rings (L,P,S, and M) mounted on a central rod.

It localises to the cell outer membrane. It is found in the bacterial flagellum basal body. Assembles around the rod to form the L-ring and probably protects the motor/basal body from shearing forces during rotation. This Aliivibrio salmonicida (strain LFI1238) (Vibrio salmonicida (strain LFI1238)) protein is Flagellar L-ring protein.